Consider the following 347-residue polypeptide: tRNA pseudouridine synthase D (347 aa).

Residue aspartate 81 is the Nucleophile of the active site. One can recognise a TRUD domain in the interval 158-304; that stretch reads GVPNYFGNQR…MRHDRRAIAL (147 aa).

It belongs to the pseudouridine synthase TruD family.

It carries out the reaction uridine(13) in tRNA = pseudouridine(13) in tRNA. In terms of biological role, responsible for synthesis of pseudouridine from uracil-13 in transfer RNAs. The sequence is that of tRNA pseudouridine synthase D from Vibrio vulnificus (strain CMCP6).